Consider the following 203-residue polypeptide: Holliday junction branch migration complex subunit RuvA (203 aa).

The domain I stretch occupies residues 1–64 (MIGRLRGIIL…EDAQLLYGFN (64 aa)). The tract at residues 65-142 (NKQERTLFKE…KGLHGDLFTP (78 aa)) is domain II. Residues 143–154 (AVDLVLTSPASP) are flexible linker. Residues 155–203 (TSEDAEQEAVAALVALGYKPQEASRMVNKIARPDASSETLIRDALRAAL) are domain III.

This sequence belongs to the RuvA family. Homotetramer. Forms an RuvA(8)-RuvB(12)-Holliday junction (HJ) complex. HJ DNA is sandwiched between 2 RuvA tetramers; dsDNA enters through RuvA and exits via RuvB. An RuvB hexamer assembles on each DNA strand where it exits the tetramer. Each RuvB hexamer is contacted by two RuvA subunits (via domain III) on 2 adjacent RuvB subunits; this complex drives branch migration. In the full resolvosome a probable DNA-RuvA(4)-RuvB(12)-RuvC(2) complex forms which resolves the HJ.

The protein resides in the cytoplasm. The RuvA-RuvB-RuvC complex processes Holliday junction (HJ) DNA during genetic recombination and DNA repair, while the RuvA-RuvB complex plays an important role in the rescue of blocked DNA replication forks via replication fork reversal (RFR). RuvA specifically binds to HJ cruciform DNA, conferring on it an open structure. The RuvB hexamer acts as an ATP-dependent pump, pulling dsDNA into and through the RuvAB complex. HJ branch migration allows RuvC to scan DNA until it finds its consensus sequence, where it cleaves and resolves the cruciform DNA. The polypeptide is Holliday junction branch migration complex subunit RuvA (Salmonella choleraesuis (strain SC-B67)).